The sequence spans 314 residues: Malate dehydrogenase (314 aa).

NAD(+) is bound by residues 11–16 and D35; that span reads GSGNIG. Substrate-binding residues include R84 and R90. NAD(+)-binding positions include N97 and 120–122; that span reads ITN. Substrate is bound by residues N122 and R153. Catalysis depends on H177, which acts as the Proton acceptor.

It belongs to the LDH/MDH superfamily. MDH type 3 family.

The enzyme catalyses (S)-malate + NAD(+) = oxaloacetate + NADH + H(+). In terms of biological role, catalyzes the reversible oxidation of malate to oxaloacetate. The sequence is that of Malate dehydrogenase from Rickettsia bellii (strain OSU 85-389).